Here is a 258-residue protein sequence, read N- to C-terminus: Gene 3 protein (258 aa).

The segment covering 163 to 176 (STENLLGQTQSSTH) has biased composition (polar residues). The interval 163-258 (STENLLGQTQ…TRRYPPSFFK (96 aa)) is disordered. Residues 214–240 (SIREETVSGMARAREECNSPSEHDRLT) are compositionally biased toward basic and acidic residues.

The polypeptide is Gene 3 protein (Equine herpesvirus 1 (strain Kentucky A) (EHV-1)).